We begin with the raw amino-acid sequence, 366 residues long: Trans-enoyl reductase caaB (366 aa).

The Enoyl reductase (ER) domain maps to 19-363 (GAGQLSIYHD…RQTVSGHKLV (345 aa)). Position 219 (Tyr-219) interacts with NADP(+).

This sequence belongs to the zinc-containing alcohol dehydrogenase family. In terms of assembly, monomer.

The protein operates within secondary metabolite biosynthesis. In terms of biological role, trans-enoyl reductase; part of the gene cluster that produces the acyltetronic acid derivatives carlosic acid, agglomerin F and carlosic acid methyl ether. The PKS domains of caaA condenses two malonyl-CoAs into an acetyl starter unit, and form 1,3-diketohexanyl-ACP with the help of the trans-enoyl reductase caaB. Next, the C domain of caaA forms the ester bond between the acyl chain and L-malic acid (derived from the TCA cycle) and accepted by the A domain instead of an amino acid. Finally, the terminal reductase/Dieckmann cyclization (R/DKC) domain cyclizes the intermediate and releases the product as carlosic acid. Decarboxylation of carlosic acid followed by formation of the exocyclic double bond is likely to be catalyzed by the cytochrome P450 monooxygenase caaC. Thus, decarboxylation and oxidation would be coupled (performed by one enzyme) through concomitant abstraction of the hydrogen at C-4. Finally, sequential oxidations of the terminal C-10 methyl group to form carboxylic acid would be catalyzed by the 2-oxoglutarate-dependent dioxygenase caaD, which is required for the biosynthesis of agglomerin F. This chain is Trans-enoyl reductase caaB, found in Aspergillus niger (strain ATCC MYA-4892 / CBS 513.88 / FGSC A1513).